The following is a 521-amino-acid chain: GMC-type oxidoreductase acuG (521 aa).

FAD is bound by residues Thr-14 to Val-15, Glu-34 to Ala-35, Leu-82, Asn-90 to Leu-93, Ala-492, and Tyr-503 to Gln-504.

Belongs to the GMC oxidoreductase family. It depends on FAD as a cofactor.

It participates in secondary metabolite biosynthesis. Functionally, GMC-type oxidoreductase; part of the gene cluster that mediates the biosynthesis of aculins. The pathway begins with the synthesis of 6-methylsalicylic acid by the polyketide synthase (PKS) acuA via condensation of acetate and malonate units. The 6-methylsalicylic acid decarboxylase acuB then catalyzes the decarboxylation of 6-methylsalicylic acid to yield m-cresol (also known as 3-methylphenol). These first reactions occur in the cytosol. The intermediate m-cresol is then transported into the endoplasmic reticulum where the cytochrome P450 monooxygenase acuC converts it to m-hydroxybenzyl alcohol, which is further converted to gentisyl alcohol by the cytochrome P450 monooxygenase acuD. Gentisyl alcohol is further oxidized by the oxidoreductase acuE that probably catalyzes hydroxylation of the aromatic ring. The aromatic system might then be opened by oxidation through a Baeyer-Villiger type of oxidation, which could be catalyzed by acuF, with the carboxylic acid at C-1 subsequently reduced to an aldehyde by acuG. Subsequently, a hemiacetal is formed, before the dehydrogenase acuH would reduce the double bond between C-4 and C-6. Finally, keto-enol tautomerism results in formation of aculinic acid, which exists as two diastereomers (both R/S configurations at C-1) by non-enzymatic hemiacetal formation. The carboxypeptidase acuI could be involved in the linking of aculinic acid to an aculene A moiety produced by the aculene biosynthesis cluster and which leads to the production of aculin A. AcuI may also be involved in the attachment of proline to aculinic acid to form epi-aculins A and B. This is GMC-type oxidoreductase acuG from Aspergillus aculeatus (strain ATCC 16872 / CBS 172.66 / WB 5094).